A 524-amino-acid polypeptide reads, in one-letter code: Leucine-rich repeat-containing protein 1 (524 aa).

LRR repeat units lie at residues 11–34, 35–58, 60–81, 83–105, 107–126, 127–149, 150–172, 173–196, 198–218, 219–242, 244–264, 265–288, 290–310, 311–334, 336–356, 357–380, and 382–405; these read NRHV…IYRY, ARSL…FFQL, KLRK…IANF, QLVE…SFCK, LQVA…SFPE, LQNL…NIGN, LYNL…SLTQ, LRRL…IGAL, HLKD…EIGN, LKNL…ISGL, SLTD…GIGK, LKKL…VGEC, SLTE…SIGK, LKKL…IGGC, SLTV…EVSQ, ATEL…LTAL, and LKAL…TDYT. Position 480 is a phosphothreonine (Thr480). A coiled-coil region spans residues 484–512; that stretch reads GELKHMKKTVENLRNDMNAAKGLDSNKNE.

In terms of assembly, interacts with DLG1 and DLG4. May form a complex with DLG1 and ERBIN, where interaction between LRRC1 and ERBIN is indirect. In terms of tissue distribution, expressed strongly in testis and placenta, followed by heart, lung, kidney, thyroid, trachea, colon, prostate and pancreas.

It is found in the cytoplasm. The protein resides in the membrane. This Homo sapiens (Human) protein is Leucine-rich repeat-containing protein 1 (LRRC1).